Here is a 108-residue protein sequence, read N- to C-terminus: Replication restart protein PriB (108 aa).

The SSB domain occupies 8–108 (VDNRFSLIGK…LHAEQIEFIE (101 aa)).

This sequence belongs to the PriB family. Homodimer. Interacts with PriA and DnaT. Component of the replication restart primosome. Primosome assembly occurs via a 'hand-off' mechanism. PriA binds to replication forks, subsequently PriB then DnaT bind; DnaT then displaces ssDNA to generate the helicase loading substrate.

Functionally, involved in the restart of stalled replication forks, which reloads the replicative helicase on sites other than the origin of replication; the PriA-PriB pathway is the major replication restart pathway. During primosome assembly it facilitates complex formation between PriA and DnaT on DNA; stabilizes PriA on DNA. Stimulates the DNA unwinding activity of PriA helicase. This is Replication restart protein PriB from Histophilus somni (strain 129Pt) (Haemophilus somnus).